The chain runs to 54 residues: UPF0391 membrane protein RC1_1636 (54 aa).

2 helical membrane passes run Tyr-3–Ile-23 and Ile-30–Leu-50.

The protein belongs to the UPF0391 family.

Its subcellular location is the cell membrane. The protein is UPF0391 membrane protein RC1_1636 of Rhodospirillum centenum (strain ATCC 51521 / SW).